A 303-amino-acid polypeptide reads, in one-letter code: Recombination-associated protein RdgC (303 aa).

This sequence belongs to the RdgC family.

It is found in the cytoplasm. It localises to the nucleoid. Its function is as follows. May be involved in recombination. This Yersinia enterocolitica serotype O:8 / biotype 1B (strain NCTC 13174 / 8081) protein is Recombination-associated protein RdgC.